We begin with the raw amino-acid sequence, 99 residues long: DNA-binding protein Fis (99 aa).

The H-T-H motif DNA-binding region spans 75–94 (QTRAANMLGINRGTLRKKLK).

This sequence belongs to the transcriptional regulatory Fis family. In terms of assembly, homodimer.

Functionally, activates ribosomal RNA transcription. Plays a direct role in upstream activation of rRNA promoters. The chain is DNA-binding protein Fis from Haemophilus influenzae (strain 86-028NP).